Consider the following 417-residue polypeptide: MDFAPELITIGQKAKDAARKLAYAGTAAKNKALLAMAEALLNHEQKILEANRKDVEAAIQKGTKKSLVNRLALTSEGIRQMSDALKEVVNLGDPVGEGEFWTRPNGLRIQRTRVPLGVVAMIYEARPNVTVDAAALCLKSGNAVILRGGSEAIESNKILSKVIAGAAESQGMPTACIQLLENTNRQWVQQLMKMNGYVDVIIPRGGAGLIETVVKEATVPVIETGTGVCHAYVDGEADLAKGVSIVFNAKTQKPGVCNALEAVLVNEAVAQEFLPLLGEKFRDYGVEIRGCEKTCAILPYAAKAKEEDWGIEHLDLIISAKVVQGVDEAMDHIYQYGTKHSETIITENYTTAQRFLNEVDAAAVYVNASTRFTDGGRFGFGAEIGISTQKLHARGPMGLQALTTMKYMVYGEDHIVT.

Belongs to the gamma-glutamyl phosphate reductase family.

Its subcellular location is the cytoplasm. It carries out the reaction L-glutamate 5-semialdehyde + phosphate + NADP(+) = L-glutamyl 5-phosphate + NADPH + H(+). It participates in amino-acid biosynthesis; L-proline biosynthesis; L-glutamate 5-semialdehyde from L-glutamate: step 2/2. In terms of biological role, catalyzes the NADPH-dependent reduction of L-glutamate 5-phosphate into L-glutamate 5-semialdehyde and phosphate. The product spontaneously undergoes cyclization to form 1-pyrroline-5-carboxylate. The chain is Gamma-glutamyl phosphate reductase from Desulfitobacterium hafniense (strain DSM 10664 / DCB-2).